Consider the following 74-residue polypeptide: Small ribosomal subunit protein eS17 (74 aa).

Belongs to the eukaryotic ribosomal protein eS17 family.

This is Small ribosomal subunit protein eS17 from Ignicoccus hospitalis (strain KIN4/I / DSM 18386 / JCM 14125).